The primary structure comprises 197 residues: Glycerol-3-phosphate acyltransferase (197 aa).

Helical transmembrane passes span M1–I21, L50–A70, I82–F102, L112–A132, and G159–H179.

Belongs to the PlsY family. In terms of assembly, probably interacts with PlsX.

The protein resides in the cell inner membrane. The enzyme catalyses an acyl phosphate + sn-glycerol 3-phosphate = a 1-acyl-sn-glycero-3-phosphate + phosphate. The protein operates within lipid metabolism; phospholipid metabolism. In terms of biological role, catalyzes the transfer of an acyl group from acyl-phosphate (acyl-PO(4)) to glycerol-3-phosphate (G3P) to form lysophosphatidic acid (LPA). This enzyme utilizes acyl-phosphate as fatty acyl donor, but not acyl-CoA or acyl-ACP. This is Glycerol-3-phosphate acyltransferase from Desulfotalea psychrophila (strain LSv54 / DSM 12343).